Here is a 1687-residue protein sequence, read N- to C-terminus: Brefeldin A-inhibited guanine nucleotide-exchange protein 1 (1687 aa).

Positions 494 to 529 (SLENEAPANNHSNSNEEDGTTIDHDFHPDLNPESSD) are disordered. A compositionally biased stretch (basic and acidic residues) spans 514 to 523 (TIDHDFHPDL). The region spanning 532–719 (TLEQRRAYKI…GALYDQVVIN (188 aa)) is the SEC7 domain. Glutamate 634 is a catalytic residue. The disordered stretch occupies residues 1229–1248 (KGRSSSPSTPVTDDHSPSTQ). A compositionally biased stretch (polar residues) spans 1232–1248 (SSSPSTPVTDDHSPSTQ).

As to quaternary structure, homodimer.

It is found in the cytoplasm. It localises to the cytosol. Its subcellular location is the membrane. With respect to regulation, inhibited by brefeldin A. Activates the ARF proteins by exchanging bound GDP for free GTP. Plays a role in vesicular protein sorting. The polypeptide is Brefeldin A-inhibited guanine nucleotide-exchange protein 1 (BIG1) (Arabidopsis thaliana (Mouse-ear cress)).